We begin with the raw amino-acid sequence, 1039 residues long: Integrin alpha-IIb (1039 aa).

Positions 1–31 (MARALCPLQALWLLEWVLLLLGPCAAPPAWA) are cleaved as a signal peptide. Topologically, residues 32–993 (LNLDPVQLTF…TQLLRALEER (962 aa)) are extracellular. FG-GAP repeat units follow at residues 35–96 (DPVQ…GGQC), 110–173 (VGSQ…RRAE), 187–238 (VEND…FSSY), 251–305 (SLSF…DSYY), 306–371 (QRLH…PHAL), 373–432 (APSL…GLRS), and 435–496 (SQVL…VQDS). N-linked (GlcNAc...) asparagine glycosylation occurs at Asn-46. 3 cysteine pairs are disulfide-bonded: Cys-87/Cys-96, Cys-138/Cys-161, and Cys-177/Cys-198. Ca(2+) is bound by residues Glu-274, Asp-276, and Asp-278. The N-linked (GlcNAc...) asparagine glycan is linked to Asn-280. Ca(2+) is bound by residues Thr-281, Glu-283, Asp-328, Asn-330, Asp-332, Arg-334, Asp-336, Asp-396, Asp-398, Asp-400, Tyr-402, Asp-404, Asp-457, Asp-459, Asn-461, Tyr-463, and Asp-465. Cystine bridges form between Cys-504/Cys-515 and Cys-521/Cys-576. Asn-601 carries an N-linked (GlcNAc...) asparagine glycan. 4 cysteine pairs are disulfide-bonded: Cys-633/Cys-639, Cys-705/Cys-718, Cys-857/Cys-921, and Cys-911/Cys-916. N-linked (GlcNAc...) asparagine glycosylation occurs at Asn-711. Residue Ile-874 is glycosylated (O-linked (GalNAc...) serine; in variant S-874). An O-linked (GalNAc...) serine glycan is attached at Ser-878. The residue at position 891 (Gln-891) is a Pyrrolidone carboxylic acid; in light chain form 1. An N-linked (GlcNAc...) asparagine glycan is attached at Asn-962. Residues 994–1019 (AIPIWWVLVGVLGGLLLLTILVLAMW) traverse the membrane as a helical segment. Residues 1020–1039 (KVGFFKRNRPPLEEDDEEGE) lie on the Cytoplasmic side of the membrane. A GFFKR motif motif is present at residues 1022–1026 (GFFKR).

This sequence belongs to the integrin alpha chain family. Heterodimer of an alpha and a beta subunit. The alpha subunit is composed of a heavy and a light chain linked by a disulfide bond. Alpha-IIb associates with beta-3. Directly interacts with RNF181. Interacts (via C-terminus cytoplasmic tail region) with CIB1; the interaction is direct and calcium-dependent. Interacts (via C-terminus cytoplasmic tail region) with CIB2, CIB3 and CIB4; the interactions are stabilized/increased in a calcium and magnesium-dependent manner. ITGA2B:ITGB3 interacts with PPIA/CYPA; the interaction is ROS and PPIase activity-dependent and is increased in the presence of thrombin. ITGA2B:ITGB3 interacts with SELP (via C-type lectin domain); the interaction mediates cell-cell interaction and adhesion. Post-translationally, cleaved by ELANE; the cleavage promotes activation of platelet fibrinogen receptor integrin alpha-IIb/beta-3. As to expression, isoform 1 and isoform 2 are expressed in platelets and megakaryocytes, but not in reticulocytes. Not detected in Jurkat, nor in U937 cell lines. Isoform 3 is expressed in prostate adenocarcinoma, as well as in several erythroleukemia, prostate adenocarcinoma and melanoma cell lines, including PC-3, DU-145, HEL, WM983A, WM983B and WM35. Not detected in platelets, nor in normal prostate (at protein level).

It localises to the membrane. In terms of biological role, integrin alpha-IIb/beta-3 is a receptor for fibronectin, fibrinogen, plasminogen, prothrombin, thrombospondin and vitronectin. It recognizes the sequence R-G-D in a wide array of ligands. It recognizes the sequence H-H-L-G-G-G-A-K-Q-A-G-D-V in fibrinogen gamma chain. Following activation integrin alpha-IIb/beta-3 brings about platelet/platelet interaction through binding of soluble fibrinogen. This step leads to rapid platelet aggregation which physically plugs ruptured endothelial cell surface. The polypeptide is Integrin alpha-IIb (ITGA2B) (Homo sapiens (Human)).